The primary structure comprises 73 residues: Putative neurotoxin NaH-Cpp1a (73 aa).

The first 23 residues, 1-23, serve as a signal peptide directing secretion; it reads MKSFYGILCVAVLMMFHLEMSES. Intrachain disulfides connect Cys-43–Cys-58, Cys-50–Cys-63, and Cys-57–Cys-70.

In terms of tissue distribution, expressed outside of acontia.

Its subcellular location is the secreted. The protein localises to the nematocyst. Its function is as follows. Putative neurotoxin. The polypeptide is Putative neurotoxin NaH-Cpp1a (Calliactis polypus (Hermit crab anemone)).